Reading from the N-terminus, the 640-residue chain is Probable potassium transport system protein Kup 2 (640 aa).

A run of 12 helical transmembrane segments spans residues 19-39 (LFSSTTFLLALGSLGVVYGDI), 67-87 (VLSLVFWSMTMVICVKYVVFV), 118-138 (GVVAFAATLGASLLYGDGVIT), 155-175 (EAAKPLVVPLTCVVLLALFLV), 181-201 (GVIGNVFGPIMIVWFVTIAAL), 230-250 (FVGVVVLGSVVLCITGGEALY), 265-285 (WLGLAFPALLLNYFGQGALLL), 307-327 (MVCLSTIATVIASQAMISGVF), 355-375 (VYIPEVNYLLMIACLGLVLVF), 384-404 (AYGIAVTADMALTSILFFFVI), 415-435 (AVPLLVLFLFFDLSYFGANLF), and 437-457 (IFDGGWITLTIAAIVATSMIT).

This sequence belongs to the HAK/KUP transporter (TC 2.A.72) family.

The protein resides in the cell inner membrane. It catalyses the reaction K(+)(in) + H(+)(in) = K(+)(out) + H(+)(out). Functionally, transport of potassium into the cell. Likely operates as a K(+):H(+) symporter. The protein is Probable potassium transport system protein Kup 2 of Syntrophobacter fumaroxidans (strain DSM 10017 / MPOB).